The sequence spans 467 residues: Cysteine--tRNA ligase (467 aa).

C29 is a binding site for Zn(2+). A 'HIGH' region motif is present at residues P31–N41. Positions 209, 234, and 238 each coordinate Zn(2+). The 'KMSKS' region motif lies at K266–S270. K269 serves as a coordination point for ATP. S270 bears the Phosphoserine mark.

This sequence belongs to the class-I aminoacyl-tRNA synthetase family. In terms of assembly, monomer. Requires Zn(2+) as cofactor.

It is found in the cytoplasm. It carries out the reaction tRNA(Cys) + L-cysteine + ATP = L-cysteinyl-tRNA(Cys) + AMP + diphosphate. The chain is Cysteine--tRNA ligase from Bacillus licheniformis (strain ATCC 14580 / DSM 13 / JCM 2505 / CCUG 7422 / NBRC 12200 / NCIMB 9375 / NCTC 10341 / NRRL NRS-1264 / Gibson 46).